The following is a 257-amino-acid chain: Adenylate kinase (257 aa).

51–56 (GAGKGT) is an ATP binding site. An NMP region spans residues 71–100 (ATGDMLRSQVAKKTELGKEAKKIMDQGGLV). Residues threonine 72, arginine 77, 98–100 (GLV), 127–130 (GFPR), and glutamine 134 contribute to the AMP site. An LID region spans residues 168-205 (GRLVHPASGRSYHKIFNPPKQEMKDDITGEPLIQRSDD). ATP contacts are provided by residues arginine 169 and 178–179 (SY). Positions 202 and 213 each coordinate AMP. Glutamine 241 serves as a coordination point for ATP.

The protein belongs to the adenylate kinase family. AK2 subfamily. In terms of assembly, monomer.

The protein resides in the cytoplasm. The protein localises to the cytosol. It localises to the mitochondrion intermembrane space. The catalysed reaction is AMP + ATP = 2 ADP. Functionally, catalyzes the reversible transfer of the terminal phosphate group between ATP and AMP. Plays an important role in cellular energy homeostasis and in adenine nucleotide metabolism. Adenylate kinase activity is critical for regulation of the phosphate utilization and the AMP de novo biosynthesis pathways. The sequence is that of Adenylate kinase (adk1) from Aspergillus terreus (strain NIH 2624 / FGSC A1156).